The sequence spans 217 residues: Ribulose-phosphate 3-epimerase (217 aa).

Position 6 (S6) interacts with substrate. Positions 29, 31, and 62 each coordinate a divalent metal cation. D31 serves as the catalytic Proton acceptor. Substrate-binding positions include H62, G138 to G141, D171 to G173, and G193 to S194. D171 contributes to the a divalent metal cation binding site. D171 (proton donor) is an active-site residue.

This sequence belongs to the ribulose-phosphate 3-epimerase family. A divalent metal cation is required as a cofactor.

It carries out the reaction D-ribulose 5-phosphate = D-xylulose 5-phosphate. The protein operates within carbohydrate degradation. Catalyzes the reversible epimerization of D-ribulose 5-phosphate to D-xylulose 5-phosphate. The polypeptide is Ribulose-phosphate 3-epimerase (Helicobacter pylori (strain J99 / ATCC 700824) (Campylobacter pylori J99)).